The chain runs to 138 residues: Large ribosomal subunit protein bL19 (138 aa).

The protein belongs to the bacterial ribosomal protein bL19 family.

Functionally, this protein is located at the 30S-50S ribosomal subunit interface and may play a role in the structure and function of the aminoacyl-tRNA binding site. This is Large ribosomal subunit protein bL19 from Rickettsia massiliae (strain Mtu5).